Consider the following 622-residue polypeptide: Phosphatidylinositol 4-kinase gamma 6 (622 aa).

One can recognise a Ubiquitin-like; degenerate domain in the interval 38-95; it reads RRVFVQTDTGCVLGVELDRNDNVHTVKKRLQIAFNFPTEESSLTFGDMVLKNDLSAVR. Positions 158-459 constitute a PI3K/PI4K catalytic domain; that stretch reads GVEPIPVNGG…LTTEQDVLSP (302 aa). The tract at residues 164–170 is G-loop; it reads VNGGLGG. ATP is bound by residues 165–171, Lys186, and 277–280; these read NGGLGGA and QKFV. A catalytic loop region spans residues 310 to 318; sequence LNTDRHGGN. Positions 339–365 are activation loop; sequence PIDHGLCLPETLEDPYFEWIHWPQASI. Asp341 is an ATP binding site. Ser565 carries the phosphoserine modification.

It belongs to the PI3/PI4-kinase family. Type II PI4K subfamily.

The catalysed reaction is a 1,2-diacyl-sn-glycero-3-phospho-(1D-myo-inositol) + ATP = a 1,2-diacyl-sn-glycero-3-phospho-(1D-myo-inositol 4-phosphate) + ADP + H(+). The phosphorylation of phosphatidylinositol (PI) to PI4P is the first committed step in the generation of phosphatidylinositol 4,5-bisphosphate (PIP2), a precursor of the second messenger inositol 1,4,5-trisphosphate (InsP3). This is Phosphatidylinositol 4-kinase gamma 6 (PI4KG6) from Arabidopsis thaliana (Mouse-ear cress).